The following is a 271-amino-acid chain: Thiamine thiazole synthase (271 aa).

NAD(+) is bound by residues Ser-39, 58–59, Gly-66, Val-130, and 158–160; these read ER and HVD. Fe cation-binding residues include Asp-160 and His-175. Met-225 provides a ligand contact to NAD(+). Arg-235 lines the glycine pocket.

It belongs to the THI4 family. In terms of assembly, homooctamer; tetramer of dimers. Fe(2+) serves as cofactor.

It carries out the reaction hydrogen sulfide + glycine + NAD(+) = ADP-5-ethyl-4-methylthiazole-2-carboxylate + nicotinamide + 3 H2O + H(+). Its pathway is cofactor biosynthesis; thiamine diphosphate biosynthesis. Functionally, involved in the biosynthesis of the thiazole moiety of thiamine. Catalyzes the conversion of NAD and glycine to adenosine diphosphate 5-(2-hydroxyethyl)-4-methylthiazole-2-carboxylate (ADT), an adenylated thiazole intermediate, using free sulfide as a source of sulfur. This is Thiamine thiazole synthase from Metallosphaera sedula (strain ATCC 51363 / DSM 5348 / JCM 9185 / NBRC 15509 / TH2).